An 892-amino-acid chain; its full sequence is Smad protein daf-3 (892 aa).

2 disordered regions span residues 1–43 and 135–161; these read MGDH…GLED and PYLDPDSQDDDPEDGVNYPDPDLFDTK. Residues 15–26 are compositionally biased toward polar residues; that stretch reads IPPQFNYSQPGT. Residues 198–347 enclose the MH1 domain; that stretch reads KIVEYLMYYR…YEIVIGTMIV (150 aa). The segment at 505–552 is disordered; it reads YPDFHHPFNQQPHQPPQLSQNHTSQQGSHQPGHQGQVPNDPPISRPVL. The segment covering 528–540 has biased composition (low complexity); it reads SQQGSHQPGHQGQ. In terms of domain architecture, MH2 spans 657–880; the sequence is WGTIVYYEKN…TNCFEPLGME (224 aa).

It belongs to the dwarfin/SMAD family. Interacts with R-SMADs daf-8 and daf-14. Interacts with daf-14 in a daf-8 dependent manner. May interact with daf-5.

Its subcellular location is the cytoplasm. The protein localises to the nucleus. It localises to the chromosome. Functionally, transcriptional regulator and common SMAD (co-SMAD), required to regulate entry into a developmentally arrested larval state known as dauer, in response to harsh environmental conditions. Probable component of transcriptional regulatory complex with SMAD protein daf-5. Acts antagonistically to SMAD signaling downstream of TGF-beta-like daf-7 signaling. Binds to the 5'-GTCTG-3' motif found in regulatory regions and may modulate the expression of genes involved in TGF-beta-like daf-7 and Notch lag-2 signaling. May regulate gene expression outside the dauer pathway. This Caenorhabditis elegans protein is Smad protein daf-3.